The primary structure comprises 193 residues: MMEPFRTHKGTVAVLMNDNIDTDQIIPKQYLKRIERTGFGKFLFDEWRYEEDRKENPHFPLNDPERKGASILITGENFGCGSSREHAPWALADYGFRVIIAGGFADIFYMNCMKNGMLPIVMDKETREKLAAIEARTIVEVDLENEVIMTTQHQFHFSIEKMWREKLLKGLDEIEITMQYEEYIQEYEEKVVH.

This sequence belongs to the LeuD family. LeuD type 1 subfamily. In terms of assembly, heterodimer of LeuC and LeuD.

It catalyses the reaction (2R,3S)-3-isopropylmalate = (2S)-2-isopropylmalate. Its pathway is amino-acid biosynthesis; L-leucine biosynthesis; L-leucine from 3-methyl-2-oxobutanoate: step 2/4. Its function is as follows. Catalyzes the isomerization between 2-isopropylmalate and 3-isopropylmalate, via the formation of 2-isopropylmaleate. The protein is 3-isopropylmalate dehydratase small subunit of Bacillus cytotoxicus (strain DSM 22905 / CIP 110041 / 391-98 / NVH 391-98).